The sequence spans 130 residues: Acidic phospholipase A2 daboiatoxin B chain (130 aa).

The signal sequence occupies residues 1-8; it reads MCLIGVEG. Intrachain disulfides connect C34–C123, C36–C52, C51–C103, C57–C130, C58–C96, C65–C89, and C83–C94. Ca(2+) contacts are provided by Y35, G37, and G39. Residue H55 is part of the active site. D56 serves as a coordination point for Ca(2+). D97 is a catalytic residue.

This sequence belongs to the phospholipase A2 family. Group II subfamily. D49 sub-subfamily. As to quaternary structure, heterodimer of an acidic protein having phospholipase A2 activity (B chain) and an A chain which weakly inhibits the B chain enzymatic activity but potentiates its lethal potency. Requires Ca(2+) as cofactor. Expressed by the venom gland.

It localises to the secreted. It carries out the reaction a 1,2-diacyl-sn-glycero-3-phosphocholine + H2O = a 1-acyl-sn-glycero-3-phosphocholine + a fatty acid + H(+). Functionally, monomer: Snake venom phospholipase A2 (PLA2) that shows a high PLA2 activity (2110 umol/min/mg). In terms of biological role, heterodimer (A and B chains): snake venom phospholipase A2 that shows a moderate PLA2 activity (1377 umol/min/mg). Acts as a presynaptic neurotoxin. In vivo, induces edema and produces neurotoxic symptoms in mice. It exhibits indirect hemolysis and a strong myonecrotic activity and is cytotoxic. PLA2 catalyzes the calcium-dependent hydrolysis of the 2-acyl groups in 3-sn-phosphoglycerides. The chain is Acidic phospholipase A2 daboiatoxin B chain from Daboia siamensis (Eastern Russel's viper).